The following is a 305-amino-acid chain: MKEFFRLSRKGFTGREDQDSAQIPDDLWVKCSSCRELIYKKQLNDNLKVCPKCGHHMRLSAHEWLGLLDVGSFREMDANLLPTDPLGFVTDEESYAAKLAKTQQRTGMADAVIAGIGAISNMQICVAVADFSFMGASMGSVYGEKMARSAERAAELGVPLLTINTSGGARQQEGVIGLMQMAKVTMALTRLADAGQPHIALLVDPCYGGVTASYPSVADIIIAEPGANIGFAGKRLIEQIMRQKLPAGFQTAEFMLEHGMIDMVVPRSEMRDTLARILRLYRQRSTSPAKAELAGRRATLPQPIM.

The 270-residue stretch at Leu27–Arg296 folds into the CoA carboxyltransferase N-terminal domain. Zn(2+) contacts are provided by Cys31, Cys34, Cys50, and Cys53. Residues Cys31 to Cys53 form a C4-type zinc finger.

It belongs to the AccD/PCCB family. Acetyl-CoA carboxylase is a heterohexamer composed of biotin carboxyl carrier protein (AccB), biotin carboxylase (AccC) and two subunits each of ACCase subunit alpha (AccA) and ACCase subunit beta (AccD). The cofactor is Zn(2+).

Its subcellular location is the cytoplasm. It catalyses the reaction N(6)-carboxybiotinyl-L-lysyl-[protein] + acetyl-CoA = N(6)-biotinyl-L-lysyl-[protein] + malonyl-CoA. Its pathway is lipid metabolism; malonyl-CoA biosynthesis; malonyl-CoA from acetyl-CoA: step 1/1. Its function is as follows. Component of the acetyl coenzyme A carboxylase (ACC) complex. Biotin carboxylase (BC) catalyzes the carboxylation of biotin on its carrier protein (BCCP) and then the CO(2) group is transferred by the transcarboxylase to acetyl-CoA to form malonyl-CoA. The protein is Acetyl-coenzyme A carboxylase carboxyl transferase subunit beta of Chloroflexus aurantiacus (strain ATCC 29366 / DSM 635 / J-10-fl).